We begin with the raw amino-acid sequence, 162 residues long: uncharacterized protein (162 aa).

An N-terminal signal peptide occupies residues 1–21; sequence MEGIMKKFFALMTLIAGISFS. Residues 32–118 adopt a coiled-coil conformation; it reads VIRESKFIAK…KKAELEKMVF (87 aa).

The protein belongs to the Skp family.

This is an uncharacterized protein from Aquifex aeolicus (strain VF5).